The chain runs to 316 residues: Arginine transport system permease protein ArgU (316 aa).

Over residues 1 to 14 (MSDLNQGPGASTAQ) the composition is skewed to polar residues. Residues 1-20 (MSDLNQGPGASTAQPKPIEA) form a disordered region. Helical transmembrane passes span 29 to 49 (WVAA…ALNN), 74 to 94 (IALT…LAVM), 108 to 128 (LYLW…WGLL), 151 to 171 (MFLL…AEIV), 217 to 237 (LISM…LELY), and 251 to 271 (VPML…LMVG). Positions 70 to 274 (ALHTIALTLL…TSILMVGQYY (205 aa)) constitute an ABC transmembrane type-1 domain.

Belongs to the binding-protein-dependent transport system permease family. The complex is probably composed of two ATP-binding proteins (ArgV), two transmembrane proteins (ArgU) and a solute-binding protein (ArgT).

The protein localises to the cell membrane. In terms of biological role, part of the ABC transporter complex ArgTUV involved in L-arginine import. May also transport L-citrulline. Probably responsible for the translocation of the substrate across the membrane. This is Arginine transport system permease protein ArgU from Corynebacterium glutamicum (strain ATCC 13032 / DSM 20300 / JCM 1318 / BCRC 11384 / CCUG 27702 / LMG 3730 / NBRC 12168 / NCIMB 10025 / NRRL B-2784 / 534).